A 373-amino-acid chain; its full sequence is Arfaptin-1 (373 aa).

Positions 1–47 (MAQESPKNSAAEIPVTSNGEVDDAHEHGYNRDLKHSLPSGLGLSETQ) are disordered. A2 is modified (N-acetylalanine). S5 bears the Phosphoserine mark. A compositionally biased stretch (basic and acidic residues) spans 22–35 (DDAHEHGYNRDLKH). A phosphoserine mark is found at S36, S39, S69, S79, and S132. One can recognise an AH domain in the interval 153-353 (TVDLELEAQI…NQKQLELTLK (201 aa)). T361 is modified (phosphothreonine).

Forms homodimers or heterodimers with ARFIP2. Interacts with non-myristoylated GTP-bound ARF3, but not to GDP-bound ARF3. Interacts with ARF1. Binds with lower affinity to ARF5 and with very little affinity to ARF6. Interacts with ARL1. Interacts with ATG9A. Post-translationally, phosphorylated by PRKD1; phosphorylation delocalizes ARFIP1 from the Golgi and disrupts its ability to inhibit the activity of ADP-ribosylation factor, an important component of the vesicle scission machinery.

The protein resides in the golgi apparatus. The protein localises to the trans-Golgi network membrane. Its function is as follows. Plays a role in controlling biogenesis of secretory granules at the trans-Golgi network. Mechanistically, binds ARF-GTP at the neck of a growing secretory granule precursor and forms a protective scaffold. Once the granule precursor has been completely loaded, active PRKD1 phosphorylates ARFIP1 and releases it from ARFs. In turn, ARFs induce fission. Through this mechanism, ensures proper secretory granule formation at the Golgi of pancreatic beta cells. The sequence is that of Arfaptin-1 from Mus musculus (Mouse).